A 530-amino-acid chain; its full sequence is Histone-arginine methyltransferase CARMER (530 aa).

Positions 141 to 450 (ASQYFQFYGY…QSYDVTIDLH (310 aa)) constitute an SAM-dependent MTase PRMT-type domain. S-adenosyl-L-methionine-binding residues include Gln154, Arg163, Gly187, Glu209, Glu238, and Thr266. Arg501 is subject to Asymmetric dimethylarginine; by autocatalysis.

It belongs to the class I-like SAM-binding methyltransferase superfamily. Protein arginine N-methyltransferase family. In terms of assembly, homodimer. The dimethylated protein is the major form.

Its subcellular location is the cytoplasm. It is found in the nucleus. It carries out the reaction L-arginyl-[protein] + 2 S-adenosyl-L-methionine = N(omega),N(omega)-dimethyl-L-arginyl-[protein] + 2 S-adenosyl-L-homocysteine + 2 H(+). In terms of biological role, methylates (mono- and asymmetric dimethylation) the guanidino nitrogens of arginyl residues in proteins. May methylate histone H3 at 'Arg-17' and activate transcription via chromatin remodeling. The polypeptide is Histone-arginine methyltransferase CARMER (Art4) (Drosophila yakuba (Fruit fly)).